The sequence spans 1028 residues: Pro-apoptotic serine protease nma111 (1028 aa).

Positions M1–V49 are disordered. Residues S32 to N43 show a composition bias toward polar residues. The segment at V82–D266 is serine protease. Active-site charge relay system residues include H120, D151, and S233. 2 PDZ domains span residues Q289–Q374 and V876–D957. Positions Q983–E1028 are disordered. Basic and acidic residues predominate over residues V990 to I1001. Over residues A1012 to E1028 the composition is skewed to acidic residues.

This sequence belongs to the peptidase S1C family.

It localises to the nucleus. Its function is as follows. Nuclear serine protease which mediates apoptosis. This chain is Pro-apoptotic serine protease nma111 (nma111), found in Aspergillus niger (strain ATCC MYA-4892 / CBS 513.88 / FGSC A1513).